A 207-amino-acid chain; its full sequence is Large ribosomal subunit protein uL4 (207 aa).

The segment at 50–76 is disordered; sequence AVKNRSAVSGGGRKPWKQKGTGRARQG.

It belongs to the universal ribosomal protein uL4 family. Part of the 50S ribosomal subunit.

In terms of biological role, one of the primary rRNA binding proteins, this protein initially binds near the 5'-end of the 23S rRNA. It is important during the early stages of 50S assembly. It makes multiple contacts with different domains of the 23S rRNA in the assembled 50S subunit and ribosome. Forms part of the polypeptide exit tunnel. This is Large ribosomal subunit protein uL4 from Staphylococcus aureus (strain MRSA252).